The primary structure comprises 208 residues: Large ribosomal subunit protein bL25 (208 aa).

Residues 185–195 (DLEEETGEAEG) are compositionally biased toward acidic residues. Residues 185–208 (DLEEETGEAEGETAAAPAEEGAES) form a disordered region. Low complexity predominate over residues 196-208 (ETAAAPAEEGAES).

Belongs to the bacterial ribosomal protein bL25 family. CTC subfamily. In terms of assembly, part of the 50S ribosomal subunit; part of the 5S rRNA/L5/L18/L25 subcomplex. Contacts the 5S rRNA. Binds to the 5S rRNA independently of L5 and L18.

Functionally, this is one of the proteins that binds to the 5S RNA in the ribosome where it forms part of the central protuberance. The sequence is that of Large ribosomal subunit protein bL25 from Rhodococcus opacus (strain B4).